We begin with the raw amino-acid sequence, 340 residues long: Aldose 1-epimerase (340 aa).

Arg77 lines the substrate pocket. His172 (proton donor) is an active-site residue. Asp243 lines the substrate pocket. Glu305 acts as the Proton acceptor in catalysis.

Belongs to the aldose epimerase family.

It is found in the cytoplasm. The enzyme catalyses alpha-D-glucose = beta-D-glucose. Its pathway is carbohydrate metabolism; hexose metabolism. In terms of biological role, mutarotase converts alpha-aldose to the beta-anomer. It is active on D-glucose, L-arabinose, D-xylose, D-galactose, maltose and lactose. This chain is Aldose 1-epimerase (galM), found in Haemophilus influenzae (strain ATCC 51907 / DSM 11121 / KW20 / Rd).